A 73-amino-acid chain; its full sequence is Crustacean hyperglycemic hormone (73 aa).

3 disulfides stabilise this stretch: Cys-7-Cys-43, Cys-23-Cys-39, and Cys-26-Cys-52. Residue Ser-73 is modified to Serine amide.

As to expression, produced by the medulla terminalis X-organ in the eyestalks and transported to the sinus gland where they are stored and released. Found also in the brain; in the neuroendocrine structures of the protocerebrum.

It is found in the secreted. Its function is as follows. Hormone found in the sinus gland of isopods and decapods which controls the blood sugar level. Has a secretagogue action over the amylase released from the midgut gland. May act as a stress hormone and may be involved in the control of molting and reproduction. The sequence is that of Crustacean hyperglycemic hormone from Armadillidium vulgare (Pillbug).